Reading from the N-terminus, the 164-residue chain is MKIDASRRGILTGRWRKASNGIRPPWSGDESHFLTHCTRCDACINACENNILQRGAGGYPSVNFKNNECSFCYACAQACPESLFSPRHTRAWDLQFTIGDACLAYQSVECRRCQDSCEPMAIIFRPTLSGIYQPQLNSQLCNGCGACAASCPVSAITAEYLHAH.

4Fe-4S ferredoxin-type domains follow at residues 28–57 (GDESHFLTHCTRCDACINACENNILQRGAG), 58–89 (GYPSVNFKNNECSFCYACAQACPESLFSPRHT), and 132–161 (YQPQLNSQLCNGCGACAASCPVSAITAEYL). The [4Fe-4S] cluster site is built by cysteine 37, cysteine 40, cysteine 43, cysteine 47, cysteine 69, cysteine 72, cysteine 75, cysteine 79, cysteine 141, cysteine 144, cysteine 147, and cysteine 151.

This sequence belongs to the NapF family. Interacts with the cytoplasmic NapA precursor. [4Fe-4S] cluster is required as a cofactor.

It is found in the cytoplasm. Functionally, could be involved in the maturation of NapA, the catalytic subunit of the periplasmic nitrate reductase, before its export into the periplasm. The chain is Ferredoxin-type protein NapF from Escherichia coli O157:H7.